The chain runs to 537 residues: MALTQRLEFRQSQSLVMTPQLMQAIKLLQLSNLDLTTFVEEELERNPLLERANDEASGGEAPAEAGQFSDSDGGHNDEPGGGPGEAFEPGQEEWMSKDLGTRAEIEQTLDTGLDNVFSEEPAEAAARNAQDAAPTTYTEWGGGASGDEDYNLEAFVAAEVTLGDHLAEQLSVAFTAPAQRMIGQYLIDLVDEAGYLPPDLGQAAERLGASQQEVEDVLAVLQKFDPPGVCARNLSECLAIQLRELDRYDPAMQALVEHLDLLAKRDIAGLRKVCGVDDEDIADMIGEIRRLNPKPGMKFGAARLQTMVPDVYVRPGPDGGWHVELNSDTLPRVLVNQTYYSELSKKIGKDGDKSYFTDALQNATWLVRALDQRARTILKVATEIVRQQDGFFTHGVAHLRPLNLKAVADAIQMHESTVSRVTANKYMATNRGTFELKYFFTASIASADGGEAHSAEAVRHHIKQLIDSEAPAAILSDDTIVERLRASGIDIARRTVAKYREAMRIPSSVQRRRDKQSALGNVLSTAMSDRSRNPEPA.

The tract at residues 52–90 (ANDEASGGEAPAEAGQFSDSDGGHNDEPGGGPGEAFEPG) is disordered. Residues 55–66 (EASGGEAPAEAG) are compositionally biased toward low complexity. Positions 403–422 (NLKAVADAIQMHESTVSRVT) form a DNA-binding region, H-T-H motif. The RPON box motif lies at 492 to 500 (ARRTVAKYR). The disordered stretch occupies residues 507 to 537 (SSVQRRRDKQSALGNVLSTAMSDRSRNPEPA). Positions 518–528 (ALGNVLSTAMS) are enriched in polar residues.

This sequence belongs to the sigma-54 factor family.

In terms of biological role, sigma factors are initiation factors that promote the attachment of RNA polymerase to specific initiation sites and are then released. This sigma factor is responsible for the expression of the nitrogen fixation genes. This Bradyrhizobium diazoefficiens (strain JCM 10833 / BCRC 13528 / IAM 13628 / NBRC 14792 / USDA 110) protein is RNA polymerase sigma-54 factor 2 (rpoN2).